A 947-amino-acid chain; its full sequence is Regulator of spindle assembly protein 2 (947 aa).

Disordered stretches follow at residues 20-148 (EKPA…LSEQ) and 173-211 (SPHEARQQTIQESSEQLEPRAKVTRSSSQPPPIDTLKPR). Basic and acidic residues-rich tracts occupy residues 30-50 (PKYRDHHEKIRNKENMEEGEK) and 62-84 (TREDYERYDEDRRLKDKARDLRI). 2 stretches are compositionally biased toward polar residues: residues 90-102 (SATPEASPSSDQY) and 179-188 (QQTIQESSEQ). Residues 276-320 (IIAEEAKKRRNEAEAVRKLIEVETQNAKKRAVIQELKDRIDKLTQ) adopt a coiled-coil conformation. Disordered stretches follow at residues 407–453 (KINP…RRIG), 575–594 (ERESMEAQESESESMELEIP), 600–662 (SVTT…GLII), and 681–705 (EQSLEEELEPRGNNDSADDSGFLLD). Over residues 411–422 (SSQLNQQSSSDA) the composition is skewed to low complexity. Polar residues predominate over residues 430–449 (EASTQMTSRLAESAMTQTSP). Residues 563–591 (AGLSHYLEQVKKERESMEAQESESESMEL) are a coiled coil. Over residues 580–590 (EAQESESESME) the composition is skewed to acidic residues. Residues 645-657 (FEHEIEEHKEPEK) show a composition bias toward basic and acidic residues.

In terms of assembly, interacts with phosphatase regulatory subunit rsa-1 and tpxl-1. May interact with spd-5. May interact with sys-1.

The protein localises to the cytoplasm. The protein resides in the cytoskeleton. Its subcellular location is the microtubule organizing center. It localises to the centrosome. In terms of biological role, recruits rsa-1 and, thereby, phosphatase let-92/paa-1 complex to the centrosomes. Recruits sys-1/beta-catenin to mitotic centrosomes during the first embryonic cell divisions. In Caenorhabditis elegans, this protein is Regulator of spindle assembly protein 2.